A 150-amino-acid polypeptide reads, in one-letter code: Transcription antitermination protein NusB (150 aa).

This sequence belongs to the NusB family.

In terms of biological role, involved in transcription antitermination. Required for transcription of ribosomal RNA (rRNA) genes. Binds specifically to the boxA antiterminator sequence of the ribosomal RNA (rrn) operons. This is Transcription antitermination protein NusB from Chloroflexus aggregans (strain MD-66 / DSM 9485).